The following is a 1185-amino-acid chain: 1-phosphatidylinositol 4,5-bisphosphate phosphodiesterase beta-2 (1185 aa).

Positions 312–463 (HDMTQPLNHY…LRGKILIKNK (152 aa)) constitute a PI-PLC X-box domain. Residue His-327 is part of the active site. Ca(2+) contacts are provided by Asn-328, Glu-357, and Asp-359. His-374 is a catalytic residue. Glu-408 lines the Ca(2+) pocket. The disordered stretch occupies residues 460-533 (IKNKKNQFSG…EEIKKMQSDE (74 aa)). Over residues 465–476 (NQFSGPTSSSKD) the composition is skewed to polar residues. Residues 501 to 524 (EGTELEEEEVEEEEEEESGNLDEE) show a composition bias toward acidic residues. A PI-PLC Y-box domain is found at 546 to 662 (MSSLVNYIQP…GYLLKHEFMR (117 aa)). Residues 662-790 (RRPDKQFNPF…CLHSESNMPL (129 aa)) enclose the C2 domain. 2 disordered regions span residues 859–888 (LAPTSNGSPAARAGAREEAMKEAAEPRTAS) and 943–979 (GACKLGPGKGSRKKRSLPREESAGAAPGEGPEGVDGR). The segment covering 872 to 888 (GAREEAMKEAAEPRTAS) has biased composition (basic and acidic residues). Ser-953 carries the phosphoserine modification. Positions 988–1147 (ELELLRQGEE…VKESVRACLR (160 aa)) form a coiled coil.

As to quaternary structure, interacts with RAC1. Forms a complex composed of at least WDR26, a G-beta:gamma unit, and PLCB2. Ca(2+) serves as cofactor.

The enzyme catalyses a 1,2-diacyl-sn-glycero-3-phospho-(1D-myo-inositol-4,5-bisphosphate) + H2O = 1D-myo-inositol 1,4,5-trisphosphate + a 1,2-diacyl-sn-glycerol + H(+). It carries out the reaction a 1,2-diacyl-sn-glycero-3-phospho-(1D-myo-inositol) + H2O = 1D-myo-inositol 1-phosphate + a 1,2-diacyl-sn-glycerol + H(+). The production of the second messenger molecules diacylglycerol (DAG) and inositol 1,4,5-trisphosphate (IP3) is mediated by activated phosphatidylinositol-specific phospholipase C enzymes. In neutrophils, participates in a phospholipase C-activating N-formyl peptide-activated GPCR (G protein-coupled receptor) signaling pathway by promoting RASGRP4 activation by DAG, to promote neutrophil functional responses. This is 1-phosphatidylinositol 4,5-bisphosphate phosphodiesterase beta-2 from Homo sapiens (Human).